Consider the following 174-residue polypeptide: Shikimate kinase 2 (174 aa).

12–17 (GCGKTT) provides a ligand contact to ATP. Mg(2+) is bound by residues Thr16 and Asp32. Positions 34, 58, and 79 each coordinate substrate. The LID domain stretch occupies residues 112–126 (EAYPLADQRPTLTGR). Residue Arg120 coordinates ATP. Arg139 provides a ligand contact to substrate. Position 155 (Gln155) interacts with ATP.

The protein belongs to the shikimate kinase family. AroL subfamily. As to quaternary structure, monomer. It depends on Mg(2+) as a cofactor.

Its subcellular location is the cytoplasm. It catalyses the reaction shikimate + ATP = 3-phosphoshikimate + ADP + H(+). Its pathway is metabolic intermediate biosynthesis; chorismate biosynthesis; chorismate from D-erythrose 4-phosphate and phosphoenolpyruvate: step 5/7. Catalyzes the specific phosphorylation of the 3-hydroxyl group of shikimic acid using ATP as a cosubstrate. The polypeptide is Shikimate kinase 2 (Erwinia tasmaniensis (strain DSM 17950 / CFBP 7177 / CIP 109463 / NCPPB 4357 / Et1/99)).